The chain runs to 107 residues: Large ribosomal subunit protein uL24 (107 aa).

Belongs to the universal ribosomal protein uL24 family. As to quaternary structure, part of the 50S ribosomal subunit.

Functionally, one of two assembly initiator proteins, it binds directly to the 5'-end of the 23S rRNA, where it nucleates assembly of the 50S subunit. In terms of biological role, one of the proteins that surrounds the polypeptide exit tunnel on the outside of the subunit. In Nitratidesulfovibrio vulgaris (strain ATCC 29579 / DSM 644 / CCUG 34227 / NCIMB 8303 / VKM B-1760 / Hildenborough) (Desulfovibrio vulgaris), this protein is Large ribosomal subunit protein uL24.